The following is a 1185-amino-acid chain: Mucin-6 (1185 aa).

2 disulfide bridges follow: Cys1-Cys132 and Cys23-Cys168. The VWFD 1 domain occupies 1–169; it reads CSTWGGGHFS…KMDDPSEICL (169 aa). A glycan (N-linked (GlcNAc...) (complex) asparagine) is linked at Asn223. Positions 257–312 constitute a TIL 1 domain; that stretch reads CSANQIYEECGSPCIKTCSNPEYSCSSHCTYGCFCPEGTVLDDISKNRTCVHLEQC. Residues 350–534 enclose the VWFD 2 domain; it reads GRCSLEGGSF…AMERETDPCA (185 aa). 2 disulfide bridges follow: Cys352/Cys488 and Cys374/Cys533. TIL domains lie at 619–676 and 737–782; these read CTGN…KSHC and GATC…PEEC. The 173-residue stretch at 821–993 folds into the VWFD 3 domain; the sequence is STCNLYGEGH…NSWKENPLCG (173 aa). Disulfide bonds link Cys823–Cys957, Cys845–Cys992, Cys854–Cys954, and Cys872–Cys879. Asn930 carries an N-linked (GlcNAc...) (complex) asparagine glycan. Residues 1160–1178 show a composition bias toward low complexity; the sequence is PTATQPTSPSTSSASTVLT. Positions 1160 to 1185 are disordered; that stretch reads PTATQPTSPSTSSASTVLTETTNPPV.

As to quaternary structure, multimer; disulfide-linked. N-glycosylated with N-acetylglucosamine (6.7%), N-acetylgalactosamine (0.6%), galactose (1.8%), mannose (4.6%), N-acetylneuraminic acid (1.0%) and sulfate-containing glycans (0.7%).

The protein resides in the secreted. Ovomucin, the glycoprotein responsible for the gel properties of egg white, is composed for 2 subunits, alpha-ovomucin/MUC5B and beta-ovomucin/MUC6. The polypeptide is Mucin-6 (MUC6) (Gallus gallus (Chicken)).